We begin with the raw amino-acid sequence, 191 residues long: Glutathione-dependent formaldehyde-activating enzyme (191 aa).

In terms of domain architecture, CENP-V/GFA spans 22 to 169; sequence FQGGTLECHC…LTELGLPPYD (148 aa). Residues Cys29, Cys31, Cys50, Cys52, Cys55, Cys97, and Cys100 each contribute to the Zn(2+) site.

It belongs to the Gfa family. The cofactor is Zn(2+).

The catalysed reaction is S-(hydroxymethyl)glutathione = glutathione + formaldehyde. It participates in one-carbon metabolism; formaldehyde degradation; formate from formaldehyde (glutathione route): step 1/3. Its function is as follows. Catalyzes the condensation of formaldehyde and glutathione to S-hydroxymethylglutathione. The sequence is that of Glutathione-dependent formaldehyde-activating enzyme from Xanthomonas axonopodis pv. citri (strain 306).